Here is a 79-residue protein sequence, read N- to C-terminus: Immunity protein CdiI (79 aa).

Transmembrane regions (helical) follow at residues 12-32 and 51-71; these read IIFFPMLCTVLGLLGIPIGLI and VVLFTLKIGIPIGFILGLGLW.

Probably interacts with cognate toxin CdiA.

The protein resides in the cell inner membrane. Its function is as follows. Immunity protein component of a toxin-immunity protein module, which functions as a cellular contact-dependent growth inhibition (CDI) system. CDI modules allow bacteria to communicate with and inhibit the growth of closely related neighboring bacteria in a contact-dependent fashion. Protects cells against CdiA from the same strain, its cognate toxin protein. Growth inhibition is reversible upon induction of this protein, occurring about 2.5 hours after induction, and requires an energy source. Does not protect against non-cognate CdiA from E.coli strain 563 / UPEC, D.dadantii strain 3937 or Y.pestis strain CO92. This is Immunity protein CdiI from Escherichia coli.